Consider the following 174-residue polypeptide: N5-carboxyaminoimidazole ribonucleotide mutase (174 aa).

Residues Ser15, Asp18, and Arg45 each contribute to the substrate site.

The protein belongs to the AIR carboxylase family. Class I subfamily.

The catalysed reaction is 5-carboxyamino-1-(5-phospho-D-ribosyl)imidazole + H(+) = 5-amino-1-(5-phospho-D-ribosyl)imidazole-4-carboxylate. The protein operates within purine metabolism; IMP biosynthesis via de novo pathway; 5-amino-1-(5-phospho-D-ribosyl)imidazole-4-carboxylate from 5-amino-1-(5-phospho-D-ribosyl)imidazole (N5-CAIR route): step 2/2. Catalyzes the conversion of N5-carboxyaminoimidazole ribonucleotide (N5-CAIR) to 4-carboxy-5-aminoimidazole ribonucleotide (CAIR). In Pyrococcus abyssi (strain GE5 / Orsay), this protein is N5-carboxyaminoimidazole ribonucleotide mutase.